A 469-amino-acid polypeptide reads, in one-letter code: Glutamate--tRNA ligase 1 (469 aa).

A 'HIGH' region motif is present at residues Pro10–Gly20. A 'KMSKS' region motif is present at residues Lys252–Arg256. An ATP-binding site is contributed by Lys255.

It belongs to the class-I aminoacyl-tRNA synthetase family. Glutamate--tRNA ligase type 1 subfamily. In terms of assembly, monomer.

It is found in the cytoplasm. The catalysed reaction is tRNA(Glu) + L-glutamate + ATP = L-glutamyl-tRNA(Glu) + AMP + diphosphate. Its function is as follows. Catalyzes the attachment of glutamate to tRNA(Glu) in a two-step reaction: glutamate is first activated by ATP to form Glu-AMP and then transferred to the acceptor end of tRNA(Glu). This chain is Glutamate--tRNA ligase 1, found in Fervidobacterium nodosum (strain ATCC 35602 / DSM 5306 / Rt17-B1).